Consider the following 974-residue polypeptide: Kinesin-like protein KIN-7A (974 aa).

The tract at residues 1-29 (MTIKTPGTPVSKMDRTPAVTPGGSSRSRE) is disordered. The Kinesin motor domain maps to 31-353 (KIVVTVRLRP…LYFANRAKEV (323 aa)). 117-124 (GQTSSGKT) is an ATP binding site. Coiled coils occupy residues 362–435 (VVSD…KGLN) and 565–603 (SANL…VMSL). Disordered regions lie at residues 605 to 649 (SNIS…PCSP) and 663 to 713 (NKAP…SSVN). Basic residues predominate over residues 616–628 (TKNHHHQSKKKKL). 2 stretches are compositionally biased toward polar residues: residues 638-649 (NRQNFLKSPCSP) and 666-682 (PQEN…TPQG). The segment covering 683 to 693 (SEKETPQKGEE) has biased composition (basic and acidic residues).

This sequence belongs to the TRAFAC class myosin-kinesin ATPase superfamily. Kinesin family. KIN-7 subfamily. Post-translationally, phosphorylated at Thr-145, Thr-687 and Thr-703 by CDKAs and CDKBs. Phosphorylated NACK1 fails to mediate cytokinesis. As to expression, expressed in roots, flowers, pollen mother cells and embryos.

It localises to the cytoplasm. The protein resides in the cytoskeleton. The protein localises to the phragmoplast. Probable plus end-directed motor protein that functions in the NACK-PQR (ANP1-MKK6-MPK4) MAP kinase signaling pathway, which is essential for somatic cell cytokinesis, especially for the cell-plate formation and its expansion. Regulates the activity and the localization of ANP1, probably by association through the non-catalytic region of the kinase. Functionally redundant with NACK2 and essential to promote the progression of cytokinesis and for cellularization (formation of the cell plate) during microgametogenesis and megagametogenesis. This chain is Kinesin-like protein KIN-7A, found in Arabidopsis thaliana (Mouse-ear cress).